Reading from the N-terminus, the 512-residue chain is Activin receptor type-2B (512 aa).

Residues 1-18 form the signal peptide; the sequence is MTAPWVALALLWGSLCAG. Over 19-137 the chain is Extracellular; sequence SGRGEAETRE…PPPTAPTLLT (119 aa). 5 disulfide bridges follow: Cys-29–Cys-59, Cys-49–Cys-77, Cys-84–Cys-103, Cys-90–Cys-102, and Cys-104–Cys-109. 2 N-linked (GlcNAc...) asparagine glycosylation sites follow: Asn-42 and Asn-65. The helical transmembrane segment at 138–158 threads the bilayer; that stretch reads VLAYSLLPIGGLSLIVLLAFW. Residues 159–512 lie on the Cytoplasmic side of the membrane; that stretch reads MYRHRKPPYG…VDLPPKESSI (354 aa). Residues 190 to 480 enclose the Protein kinase domain; the sequence is LQLLEIKARG…AGCVEERVSL (291 aa). Residues 196–204 and Lys-217 contribute to the ATP site; that span reads KARGRFGCV. Asp-321 serves as the catalytic Proton acceptor. Residues 491–512 form an interaction with DYNLT1 region; the sequence is DCLVSLVTSVTNVDLPPKESSI.

This sequence belongs to the protein kinase superfamily. TKL Ser/Thr protein kinase family. TGFB receptor subfamily. In terms of assembly, forms an activin receptor complex with activin type II receptors such as ACVR1B. Interacts with VPS39. Interacts with DYNLT1. Interacts with BMP3. Interacts with BMP2. Interacts with BMP6. Mg(2+) serves as cofactor. Mn(2+) is required as a cofactor. Post-translationally, phosphorylated. Constitutive phosphorylation is in part catalyzed by its own kinase activity.

Its subcellular location is the cell membrane. It catalyses the reaction L-threonyl-[receptor-protein] + ATP = O-phospho-L-threonyl-[receptor-protein] + ADP + H(+). The catalysed reaction is L-seryl-[receptor-protein] + ATP = O-phospho-L-seryl-[receptor-protein] + ADP + H(+). Its function is as follows. Transmembrane serine/threonine kinase activin type-2 receptor forming an activin receptor complex with activin type-1 serine/threonine kinase receptors (ACVR1, ACVR1B or ACVR1c). Transduces the activin signal from the cell surface to the cytoplasm and is thus regulating many physiological and pathological processes including neuronal differentiation and neuronal survival, hair follicle development and cycling, FSH production by the pituitary gland, wound healing, extracellular matrix production, immunosuppression and carcinogenesis. Activin is also thought to have a paracrine or autocrine role in follicular development in the ovary. Within the receptor complex, the type-2 receptors act as a primary activin receptors (binds activin-A/INHBA, activin-B/INHBB as well as inhibin-A/INHA-INHBA). The type-1 receptors like ACVR1B act as downstream transducers of activin signals. Activin binds to type-2 receptor at the plasma membrane and activates its serine-threonine kinase. The activated receptor type-2 then phosphorylates and activates the type-1 receptor. Once activated, the type-1 receptor binds and phosphorylates the SMAD proteins SMAD2 and SMAD3, on serine residues of the C-terminal tail. Soon after their association with the activin receptor and subsequent phosphorylation, SMAD2 and SMAD3 are released into the cytoplasm where they interact with the common partner SMAD4. This SMAD complex translocates into the nucleus where it mediates activin-induced transcription. Inhibitory SMAD7, which is recruited to ACVR1B through FKBP1A, can prevent the association of SMAD2 and SMAD3 with the activin receptor complex, thereby blocking the activin signal. Activin signal transduction is also antagonized by the binding to the receptor of inhibin-B via the IGSF1 inhibin coreceptor. The protein is Activin receptor type-2B (ACVR2B) of Homo sapiens (Human).